The primary structure comprises 340 residues: Polyporopepsin (340 aa).

Positions 14–330 (YVVNVGVGSP…DTTNKRLGLA (317 aa)) constitute a Peptidase A1 domain. The active site involves aspartate 32. The N-linked (GlcNAc...) asparagine glycan is linked to asparagine 192. Residue aspartate 212 is part of the active site. Residue asparagine 238 is glycosylated (N-linked (GlcNAc...) asparagine).

Belongs to the peptidase A1 family.

The enzyme catalyses Milk clotting activity, broad specificity, but fails to cleave 15-Leu-|-Tyr-16 or 16-Tyr-|-Leu-17 of insulin B chain.. This chain is Polyporopepsin, found in Irpex lacteus (Milk-white toothed polypore).